Consider the following 659-residue polypeptide: Threonine--tRNA ligase (659 aa).

A TGS domain is found at 1-60; it reads MTVYLPDGKPLELPEGATAKDVARALGEGWERRAVGAIVDGELYDLLKPLPQGAKVRLLT. Catalytic regions lie at residues 234 to 548 and 252 to 552; these read TAEE…EHFA and DHRR…GDFP. Cysteine 349, histidine 400, and histidine 529 together coordinate Zn(2+).

Belongs to the class-II aminoacyl-tRNA synthetase family. Homodimer. Zn(2+) serves as cofactor.

The protein resides in the cytoplasm. The enzyme catalyses tRNA(Thr) + L-threonine + ATP = L-threonyl-tRNA(Thr) + AMP + diphosphate + H(+). In terms of biological role, catalyzes the attachment of threonine to tRNA(Thr) in a two-step reaction: L-threonine is first activated by ATP to form Thr-AMP and then transferred to the acceptor end of tRNA(Thr). Also edits incorrectly charged L-seryl-tRNA(Thr). The sequence is that of Threonine--tRNA ligase from Thermus thermophilus (strain ATCC 27634 / DSM 579 / HB8).